The sequence spans 332 residues: Azadirone synthase LFS (332 aa).

A Fe2OG dioxygenase domain is found at 181–286; it reads ANANYTNMFH…RYSTGTFICP (106 aa). Fe cation contacts are provided by H208, D210, and H269. Residue R277 coordinates 2-oxoglutarate.

It belongs to the iron/ascorbate-dependent oxidoreductase family. Fe(2+) serves as cofactor. As to expression, mainly expressed in petioles and, to a lower extent, in roots.

It carries out the reaction (1S,3bR,4R,5aR,9aR,9bR,11aS)-1-(1-hydroxy-4-oxobutan-2-yl)-3b,6,6,9a,11a-pentamethyl-7-oxo-1H,2H,3bH,4H,5H,5aH,6H,7H,9aH,9bH,10H,11H,11aH-cyclopenta[a]phenanthren-4-yl acetate + 2-oxoglutarate + O2 = azadirone + succinate + CO2 + 2 H2O. It participates in secondary metabolite biosynthesis; terpenoid biosynthesis. Functionally, 2-oxoglutarate-Fe(II) type oxidoreductase involved in the biosynthesis of limonoids triterpene natural products such as azadirachtin, an antifeedant widely used as bioinsecticide, and possessing many medicinal applications including anti-tumoral, anti-malarial, anti-rheumatic, antibacterial, anti-inflammatory, anti-pyretic and diuretic effects. Catalyzes the formation of azadirone. The protein is Azadirone synthase LFS of Melia azedarach (Chinaberry tree).